The chain runs to 333 residues: Fe(3+)-citrate import system permease protein YfmD (333 aa).

9 helical membrane-spanning segments follow: residues 13 to 33 (LMMF…NLSV), 67 to 87 (TLIG…MQAM), 97 to 117 (IFGV…ILPA), 121 to 141 (SSVI…YMIA), 151 to 171 (LALS…AIII), 201 to 221 (FSVI…VLGL), 238 to 258 (ILIS…AGPI), 279 to 299 (YVLP…DVLA), and 302 to 322 (IAFP…TPFF).

This sequence belongs to the binding-protein-dependent transport system permease family. FecCD subfamily. In terms of assembly, the complex is composed of one ATP-binding protein (YfmF), two transmembrane proteins (YfmD and YfmE) and a solute-binding protein (YfmC).

Its subcellular location is the cell membrane. Part of the ABC transporter complex YfmCDEF involved in citrate-dependent Fe(3+) import. Involved in the translocation of the substrate across the membrane. This is Fe(3+)-citrate import system permease protein YfmD (yfmD) from Bacillus subtilis (strain 168).